Reading from the N-terminus, the 226-residue chain is Large ribosomal subunit protein uL3 (226 aa).

It belongs to the universal ribosomal protein uL3 family. In terms of assembly, part of the 50S ribosomal subunit. Forms a cluster with proteins L14 and L19.

One of the primary rRNA binding proteins, it binds directly near the 3'-end of the 23S rRNA, where it nucleates assembly of the 50S subunit. The sequence is that of Large ribosomal subunit protein uL3 from Sulfurihydrogenibium sp. (strain YO3AOP1).